The chain runs to 160 residues: Large ribosomal subunit protein eL21 (160 aa).

Basic and acidic residues-rich tracts occupy residues 112–123 and 136–145; these read NDQKKKEAKEKG and REAHFVRTNG. The tract at residues 112–145 is disordered; the sequence is NDQKKKEAKEKGTWVQLKRQPAPPREAHFVRTNG.

It belongs to the eukaryotic ribosomal protein eL21 family. As to quaternary structure, component of the large ribosomal subunit.

It localises to the cytoplasm. Its subcellular location is the cytosol. The protein localises to the endoplasmic reticulum. Its function is as follows. Component of the large ribosomal subunit. The ribosome is a large ribonucleoprotein complex responsible for the synthesis of proteins in the cell. This Capra hircus (Goat) protein is Large ribosomal subunit protein eL21 (RPL21).